Reading from the N-terminus, the 411-residue chain is Peptide chain release factor subunit 1 (411 aa).

It belongs to the eukaryotic release factor 1 family. Heterodimer of two subunits, one of which binds GTP.

It is found in the cytoplasm. Functionally, directs the termination of nascent peptide synthesis (translation) in response to the termination codons UAA, UAG and UGA. The sequence is that of Peptide chain release factor subunit 1 from Methanosphaera stadtmanae (strain ATCC 43021 / DSM 3091 / JCM 11832 / MCB-3).